A 136-amino-acid polypeptide reads, in one-letter code: DNA-directed RNA polymerase subunit omega (136 aa).

Belongs to the RNA polymerase subunit omega family. As to quaternary structure, the RNAP catalytic core consists of 2 alpha, 1 beta, 1 beta' and 1 omega subunit. When a sigma factor is associated with the core the holoenzyme is formed, which can initiate transcription.

The enzyme catalyses RNA(n) + a ribonucleoside 5'-triphosphate = RNA(n+1) + diphosphate. Promotes RNA polymerase assembly. Latches the N- and C-terminal regions of the beta' subunit thereby facilitating its interaction with the beta and alpha subunits. The polypeptide is DNA-directed RNA polymerase subunit omega (Acidiphilium cryptum (strain JF-5)).